The sequence spans 693 residues: MLKPIIHKFKYGKHNIILETGVIARQATASVLASMDDTTVLITIVSDNTTIPGQKFFPLVVNYQERTYAAGRIPGGFFRREGRPSENEILISRLIDRPIRPLFPKDFLYEVQIIATVISVNPQINPDIISIIGSSAALCLSGLPFLGPIGAARIGFLNNKYILNPSIEKIKKSSLDLVVSGTKNTIFMVEAEASILSEDNILNAILFGHESQQSLIDNIYLFSDKANKIPNIYKNIYKPDKQIFNLISKKIKKDINKAYYILKKKERLKKLNDIKQKVTSELLNNDSQLTSSKIEESIYFLERNIVRKRILKGKLRIDGRINNEVRKIDVRTGILPRVHGSALFTRGETQALVSATLGTSRDAQNLDDLLGDRTDNFLFHYNFPPYSVGEIGIVGSPKRREIGHGKLAKRSFLAVMPNIEDFPYTIRLVSEITESNGSSSMASVCGASLALMDAGVPIKSAIAGIAMGLIKENDSYIILSDILGDEDYLGDMDFKVSGSRLGITALQMDIKVSGITSDIIRSALYQAKSARLKILDIMENTLQIPRSDISKFAPRIYTIKINPEKIKDVIGKGGSIIRMLTEETGTVIEIKDDGIVKISAINGEKAKYAIKRIQEITEDIQIGKIYSGKVTRILDFGAFVSIGFGKEGLIHISQISNKRIDKVINHLKINQIIFVKVLEVDRQGRIRLSMKNI.

2 residues coordinate Mg(2+): D487 and D493. The 60-residue stretch at 554–613 (PRIYTIKINPEKIKDVIGKGGSIIRMLTEETGTVIEIKDDGIVKISAINGEKAKYAIKRI) folds into the KH domain. An S1 motif domain is found at 623–691 (GKIYSGKVTR…RQGRIRLSMK (69 aa)).

Belongs to the polyribonucleotide nucleotidyltransferase family. Component of the RNA degradosome, which is a multiprotein complex involved in RNA processing and mRNA degradation. Mg(2+) is required as a cofactor.

Its subcellular location is the cytoplasm. The catalysed reaction is RNA(n+1) + phosphate = RNA(n) + a ribonucleoside 5'-diphosphate. Its function is as follows. Involved in mRNA degradation. Catalyzes the phosphorolysis of single-stranded polyribonucleotides processively in the 3'- to 5'-direction. This chain is Polyribonucleotide nucleotidyltransferase, found in Buchnera aphidicola subsp. Cinara cedri (strain Cc).